A 230-amino-acid polypeptide reads, in one-letter code: Large ribosomal subunit protein uL1 (230 aa).

This sequence belongs to the universal ribosomal protein uL1 family. Part of the 50S ribosomal subunit.

In terms of biological role, binds directly to 23S rRNA. The L1 stalk is quite mobile in the ribosome, and is involved in E site tRNA release. Functionally, protein L1 is also a translational repressor protein, it controls the translation of the L11 operon by binding to its mRNA. This is Large ribosomal subunit protein uL1 from Ruminiclostridium cellulolyticum (strain ATCC 35319 / DSM 5812 / JCM 6584 / H10) (Clostridium cellulolyticum).